The primary structure comprises 279 residues: Putative hydroxypyruvate isomerase (279 aa).

Catalysis depends on proton donor/acceptor residues Glu155 and Glu256. The interval 260–279 is disordered; it reads GDDPSAQSFSWLPAGARAAR.

This sequence belongs to the hyi family.

The enzyme catalyses 3-hydroxypyruvate = 2-hydroxy-3-oxopropanoate. Functionally, catalyzes the reversible isomerization between hydroxypyruvate and 2-hydroxy-3-oxopropanoate (also termed tartronate semialdehyde). This is Putative hydroxypyruvate isomerase from Streptomyces coelicolor (strain ATCC BAA-471 / A3(2) / M145).